The primary structure comprises 649 residues: Epithelial sodium channel subunit gamma (649 aa).

Over 1–55 the chain is Cytoplasmic; that stretch reads MAPGEKIKAKIKKNLPVTGPQAPTIKELMRWYCLNTNTHGCRRIVVSRGRLRRLL. Residues 56–76 traverse the membrane as a helical segment; that stretch reads WIGFTLTAVALILWQCALLVF. Over 77–541 the chain is Extracellular; that stretch reads SFYTVSVSIK…GGQLGLWMSC (465 aa). Disulfide bonds link Cys100-Cys283, Cys207-Cys214, Cys260-Cys267, Cys372-Cys457, Cys394-Cys453, Cys398-Cys449, Cys407-Cys434, and Cys409-Cys423. A gating release of inhibition by proteolysis (GRIP); protease-sensitive region that is responsible for the proteolytic activation of the channel region spans residues 135-221; that stretch reads RKRREAESWN…SDCATYTFSS (87 aa). Asn209 is a glycosylation site (N-linked (GlcNAc...) asparagine). Asn497 carries N-linked (GlcNAc...) asparagine glycosylation. The helical transmembrane segment at 542-562 threads the bilayer; the sequence is SVVCVIEIIEVFFIDFFSIIA. At 563 to 649 the chain is on the cytoplasmic side; the sequence is RRQWQKAKEW…LTDTQMLDEL (87 aa). Positions 623–627 match the PY motif; recruits WW domain-containing proteins and is thereby required for ubiquitination and inhibition of the channel by NEDD4 and NEDD4L motif; the sequence is PPPKY.

Belongs to the amiloride-sensitive sodium channel (TC 1.A.6) family. SCNN1G subfamily. Component of the heterotrimeric epithelial sodium channel (ENaC) composed of an alpha/SCNN1A, a beta/SCNN1B and a gamma/SCNN1G subunit. An additional delta/SCNN1D subunit can replace the alpha/SCNN1A subunit to form an alternative channel with specific properties. Interacts with WWP1 (via WW domains). Interacts with WWP2 (via WW domains); inhibits the channel. Interacts with the full-length immature form of PCSK9 (pro-PCSK9); inhibits ENaC by promoting its proteasomal degradation. Interacts with BPIFA1; the interaction is indirect via SCNN1B and inhibits the proteolytic maturation of SCNN1A and SCNN1G and the activation of ENaC. In terms of processing, phosphorylated on serine and threonine residues. Aldosterone and insulin increase the basal level of phosphorylation. Post-translationally, ubiquitinated. Can be ubiquitinated at multiple sites and undergo monoubiquitination and polyubiquitination. Ubiquitination by NEDD4 or NEDD4L inhibits the ENaC channel through endocytosis, intracellular retention and degradation of its individual subunits. ENaC is activated through the proteolytic maturation of its subunits. Furin cleaves the SCNN1G subunit first, followed by cleavage by prostasin (PRSS8), which results in a stepwise increase in the open probability of the channel due to the release of an inhibitory tract. BPIFA1, which is recruited by the SCNN1B subunit, prevents the proteolytic activation of ENaC. In terms of processing, N-glycosylated. N-linked glycans are processed to complex type during ENaC complex assembly and transport to the plasma membrane. As to expression, expressed in kidney (at protein level).

Its subcellular location is the apical cell membrane. It catalyses the reaction Na(+)(in) = Na(+)(out). With respect to regulation, originally identified and characterized by its inhibition by the diuretic drug amiloride. Functionally, this is one of the three pore-forming subunits of the heterotrimeric epithelial sodium channel (ENaC), a critical regulator of sodium balance and fluid homeostasis. ENaC operates in epithelial tissues, where it mediates the electrodiffusion of sodium ions from extracellular fluid through the apical membrane of cells, with water following osmotically. It plays a key role in maintaining sodium homeostasis through electrogenic sodium reabsorption in the kidneys. Additionally, ENaC is essential for airway surface liquid homeostasis, which is crucial for proper mucus clearance. In Homo sapiens (Human), this protein is Epithelial sodium channel subunit gamma.